We begin with the raw amino-acid sequence, 370 residues long: Sensor protein GtcS (370 aa).

2 helical membrane-spanning segments follow: residues 2-22 and 40-60; these read ITAYILFTVTVGVTNSIVFYL and AWIVAWRLMEMVIFALSVYLY. The HAMP domain occupies 66 to 118; the sequence is KRITGPLEKITDAIQKMREGEFAQRLCFKADYELTLIQEHFNEMVAHLEKTEA. Residues 133–355 form the Histidine kinase domain; that stretch reads DLSHDFKTPI…RLENDLPYRL (223 aa).

It is found in the cell membrane. It catalyses the reaction ATP + protein L-histidine = ADP + protein N-phospho-L-histidine.. Functionally, member of the two-component regulatory system GtcS/GtcR which may act in the control of the transcription of the grs operon which encodes the multienzymes involved in the biosynthesis of the peptide antibiotic gramicidin S. Probably activates GtcR by phosphorylation. The protein is Sensor protein GtcS (gtcS) of Aneurinibacillus migulanus (Bacillus migulanus).